The chain runs to 150 residues: uncharacterized protein (150 aa).

4 helical membrane passes run 32 to 52, 64 to 84, 94 to 114, and 123 to 143; these read ILYG…AVSL, FNWL…FISG, IGAL…YLGF, and LIFH…GVNM.

Its subcellular location is the cell membrane. This is an uncharacterized protein from Bacillus subtilis (strain 168).